Reading from the N-terminus, the 424-residue chain is ATP-citrate synthase alpha chain protein 3 (424 aa).

Residues asparagine 343, threonine 345, and arginine 376 each contribute to the citrate site.

This sequence belongs to the succinate/malate CoA ligase beta subunit family. Heterooctamer of 4 alpha and 4 beta chains.

The protein localises to the cytoplasm. It is found in the cytosol. It catalyses the reaction oxaloacetate + acetyl-CoA + ADP + phosphate = citrate + ATP + CoA. Its function is as follows. ATP citrate-lyase is the primary enzyme responsible for the synthesis of cytosolic acetyl-CoA, used for the elongation of fatty acids and biosynthesis of isoprenoids, flavonoids and malonated derivatives. May supply substrate to the cytosolic acetyl-CoA carboxylase, which generates the malonyl-CoA used for the synthesis of a multitude of compounds, including very long chain fatty acids and flavonoids. Required for normal growth and development and elongation of C18 fatty acids to C20 to C24 fatty acids in seeds. In contrast to all known animal ACL enzymes having a homomeric structure, plant ACLs are composed of alpha and beta chains. This is ATP-citrate synthase alpha chain protein 3 (ACLA-3) from Arabidopsis thaliana (Mouse-ear cress).